Consider the following 133-residue polypeptide: ATP synthase epsilon chain (133 aa).

The protein belongs to the ATPase epsilon chain family. In terms of assembly, F-type ATPases have 2 components, CF(1) - the catalytic core - and CF(0) - the membrane proton channel. CF(1) has five subunits: alpha(3), beta(3), gamma(1), delta(1), epsilon(1). CF(0) has three main subunits: a, b and c.

The protein resides in the cell inner membrane. Produces ATP from ADP in the presence of a proton gradient across the membrane. This Maricaulis maris (strain MCS10) (Caulobacter maris) protein is ATP synthase epsilon chain.